The sequence spans 152 residues: Nucleoside diphosphate kinase (152 aa).

Residues lysine 11, phenylalanine 59, arginine 87, threonine 93, arginine 104, and asparagine 114 each contribute to the ATP site. Histidine 117 serves as the catalytic Pros-phosphohistidine intermediate.

Belongs to the NDK family. In terms of assembly, homotetramer. The cofactor is Mg(2+).

It localises to the cytoplasm. It catalyses the reaction a 2'-deoxyribonucleoside 5'-diphosphate + ATP = a 2'-deoxyribonucleoside 5'-triphosphate + ADP. The catalysed reaction is a ribonucleoside 5'-diphosphate + ATP = a ribonucleoside 5'-triphosphate + ADP. In terms of biological role, major role in the synthesis of nucleoside triphosphates other than ATP. The ATP gamma phosphate is transferred to the NDP beta phosphate via a ping-pong mechanism, using a phosphorylated active-site intermediate. The polypeptide is Nucleoside diphosphate kinase (Prochlorococcus marinus (strain MIT 9303)).